A 214-amino-acid polypeptide reads, in one-letter code: Uracil phosphoribosyltransferase (214 aa).

Residues Arg-81, Arg-106, and 133-141 (DPMLATGNS) each bind 5-phospho-alpha-D-ribose 1-diphosphate. Uracil contacts are provided by residues Ile-196 and 201–203 (GDA). Asp-202 contacts 5-phospho-alpha-D-ribose 1-diphosphate.

This sequence belongs to the UPRTase family. It depends on Mg(2+) as a cofactor.

It catalyses the reaction UMP + diphosphate = 5-phospho-alpha-D-ribose 1-diphosphate + uracil. It participates in pyrimidine metabolism; UMP biosynthesis via salvage pathway; UMP from uracil: step 1/1. With respect to regulation, allosterically activated by GTP. In terms of biological role, catalyzes the conversion of uracil and 5-phospho-alpha-D-ribose 1-diphosphate (PRPP) to UMP and diphosphate. The polypeptide is Uracil phosphoribosyltransferase (Legionella pneumophila (strain Paris)).